Here is a 561-residue protein sequence, read N- to C-terminus: Dihydroxy-acid dehydratase (561 aa).

D80 provides a ligand contact to Mg(2+). C121 serves as a coordination point for [2Fe-2S] cluster. Residues D122 and K123 each contribute to the Mg(2+) site. K123 bears the N6-carboxylysine mark. C194 lines the [2Fe-2S] cluster pocket. E448 lines the Mg(2+) pocket. S474 acts as the Proton acceptor in catalysis.

The protein belongs to the IlvD/Edd family. As to quaternary structure, homodimer. [2Fe-2S] cluster serves as cofactor. Requires Mg(2+) as cofactor.

The enzyme catalyses (2R)-2,3-dihydroxy-3-methylbutanoate = 3-methyl-2-oxobutanoate + H2O. It catalyses the reaction (2R,3R)-2,3-dihydroxy-3-methylpentanoate = (S)-3-methyl-2-oxopentanoate + H2O. It functions in the pathway amino-acid biosynthesis; L-isoleucine biosynthesis; L-isoleucine from 2-oxobutanoate: step 3/4. It participates in amino-acid biosynthesis; L-valine biosynthesis; L-valine from pyruvate: step 3/4. In terms of biological role, functions in the biosynthesis of branched-chain amino acids. Catalyzes the dehydration of (2R,3R)-2,3-dihydroxy-3-methylpentanoate (2,3-dihydroxy-3-methylvalerate) into 2-oxo-3-methylpentanoate (2-oxo-3-methylvalerate) and of (2R)-2,3-dihydroxy-3-methylbutanoate (2,3-dihydroxyisovalerate) into 2-oxo-3-methylbutanoate (2-oxoisovalerate), the penultimate precursor to L-isoleucine and L-valine, respectively. The protein is Dihydroxy-acid dehydratase of Anaeromyxobacter sp. (strain Fw109-5).